The following is a 107-amino-acid chain: uncharacterized protein (107 aa).

3 helical membrane-spanning segments follow: residues 20-40, 49-69, and 86-106; these read FISL…EVGI, PAIL…ISTV, and VVML…KLFL.

It is found in the membrane. This is an uncharacterized protein from Saccharomyces cerevisiae (strain ATCC 204508 / S288c) (Baker's yeast).